A 31-amino-acid chain; its full sequence is Cytochrome b6-f complex subunit 6 (31 aa).

Residues 4-24 (ITSYFGFLLAALTITSALLIG) form a helical membrane-spanning segment.

This sequence belongs to the PetL family. In terms of assembly, the 4 large subunits of the cytochrome b6-f complex are cytochrome b6, subunit IV (17 kDa polypeptide, PetD), cytochrome f and the Rieske protein, while the 4 small subunits are PetG, PetL, PetM and PetN. The complex functions as a dimer.

It localises to the plastid. It is found in the chloroplast thylakoid membrane. Functionally, component of the cytochrome b6-f complex, which mediates electron transfer between photosystem II (PSII) and photosystem I (PSI), cyclic electron flow around PSI, and state transitions. PetL is important for photoautotrophic growth as well as for electron transfer efficiency and stability of the cytochrome b6-f complex. In Piper cenocladum (Ant piper), this protein is Cytochrome b6-f complex subunit 6.